The primary structure comprises 171 residues: MELRRGGVGSQARARRMDGDSRDGGGGCKDAGSEDYENLPTSASLSTHMTAGAMAGILEHSVMYPVDSVKTRMQSLNPDPKAHYTSVYGALKKIIRTEGFWRPLRGLNVMMMGAGPAHAMYFACYENMKRTLNAVFHHQGNSHLANGICKRLSGVRKVSPSTDPSPGFSSL.

The tract at residues 1-40 is disordered; that stretch reads MELRRGGVGSQARARRMDGDSRDGGGGCKDAGSEDYENLP. One copy of the Solcar repeat lies at 43-131; it reads ASLSTHMTAG…FACYENMKRT (89 aa). 3 helical membrane-spanning segments follow: residues 45–64, 105–125, and 143–163; these read LSTHMTAGAMAGILEHSVMY, RGLNVMMMGAGPAHAMYFACY, and HLANGICKRLSGVRKVSPSTD.

The protein belongs to the mitochondrial carrier (TC 2.A.29) family. As to quaternary structure, interacts with ACB10; this interaction stabilizes SLC25A37 and enhances the function of SLC25A37 to import mitochondrial iron during erythroid differentiation.

Its subcellular location is the mitochondrion inner membrane. The enzyme catalyses Fe(2+)(in) = Fe(2+)(out). Its function is as follows. Mitochondrial iron transporter that specifically mediates iron uptake in developing erythroid cells, thereby playing an essential role in heme biosynthesis. The polypeptide is Mitoferrin-1 (SLC25A37) (Bos taurus (Bovine)).